Reading from the N-terminus, the 223-residue chain is Oxaloacetate tautomerase FAHD1, mitochondrial (223 aa).

A mitochondrion-targeting transit peptide spans Met-1–Leu-30. Glu-67, Glu-69, and Asp-98 together coordinate Mg(2+).

Belongs to the FAH family. Requires Mg(2+) as cofactor. Mn(2+) is required as a cofactor.

It localises to the mitochondrion. It catalyses the reaction oxaloacetate = enol-oxaloacetate. Functionally, tautomerase that converts enol-oxaloacetate, a strong inhibitor of succinate dehydrogenase, to the physiological keto form of oxaloacetate. The protein is Oxaloacetate tautomerase FAHD1, mitochondrial of Arabidopsis thaliana (Mouse-ear cress).